The chain runs to 340 residues: Adenosine deaminase (340 aa).

Zn(2+) contacts are provided by histidine 15 and histidine 17. 3 residues coordinate substrate: histidine 17, aspartate 19, and glycine 172. Zn(2+) is bound at residue histidine 199. Glutamate 202 acts as the Proton donor in catalysis. Aspartate 279 is a binding site for Zn(2+).

It belongs to the metallo-dependent hydrolases superfamily. Adenosine and AMP deaminases family. Adenosine deaminase subfamily. It depends on Zn(2+) as a cofactor.

It carries out the reaction adenosine + H2O + H(+) = inosine + NH4(+). The catalysed reaction is 2'-deoxyadenosine + H2O + H(+) = 2'-deoxyinosine + NH4(+). Its function is as follows. Catalyzes the hydrolytic deamination of adenosine and 2-deoxyadenosine. The protein is Adenosine deaminase of Streptococcus agalactiae serotype III (strain NEM316).